A 1182-amino-acid polypeptide reads, in one-letter code: DNA-directed RNA polymerase subunit beta' (1182 aa).

The Zn(2+) site is built by Cys59, Cys61, Cys74, and Cys77. Positions 449, 451, and 453 each coordinate Mg(2+). 4 residues coordinate Zn(2+): Cys794, Cys868, Cys875, and Cys878.

The protein belongs to the RNA polymerase beta' chain family. As to quaternary structure, the RNAP catalytic core consists of 2 alpha, 1 beta, 1 beta' and 1 omega subunit. When a sigma factor is associated with the core the holoenzyme is formed, which can initiate transcription. It depends on Mg(2+) as a cofactor. Zn(2+) serves as cofactor.

It carries out the reaction RNA(n) + a ribonucleoside 5'-triphosphate = RNA(n+1) + diphosphate. Its function is as follows. DNA-dependent RNA polymerase catalyzes the transcription of DNA into RNA using the four ribonucleoside triphosphates as substrates. This is DNA-directed RNA polymerase subunit beta' from Clostridium acetobutylicum (strain ATCC 824 / DSM 792 / JCM 1419 / IAM 19013 / LMG 5710 / NBRC 13948 / NRRL B-527 / VKM B-1787 / 2291 / W).